Reading from the N-terminus, the 514-residue chain is Cytochrome P450 monooxygenase nodJ (514 aa).

A helical membrane pass occupies residues 2–24; that stretch reads ELIVIIITLAFCILLYGTRWRAA. 3 N-linked (GlcNAc...) asparagine glycosylation sites follow: asparagine 144, asparagine 245, and asparagine 416. A heme-binding site is contributed by cysteine 432.

This sequence belongs to the cytochrome P450 family. Heme serves as cofactor.

It is found in the membrane. It participates in secondary metabolite biosynthesis. Functionally, cytochrome P450 monooxygenase; part of the gene cluster that mediates the biosynthesis of the indole diterpenes nodulisporic acids (NA). Nodulisporic acid A (NAA) and its chemically modified derivatives are of particular significance because of their highly potent insecticidal activity against blood-feeding arthropods and lack of observable adverse effects on mammals, in particular the tremogenicity associated with the paspaline-derived IDTs is not observed. The geranylgeranyl diphosphate (GGPP) synthase ggs1, localized outside of the cluster, is proposed to catalyze the first step in nodulisporic acid biosynthesis via conversion of farnesyl pyrophosphate and isopentyl pyrophosphate into geranylgeranyl pyrophosphate (GGPP). Condensation of indole-3-glycerol phosphate with GGPP by the prenyl transferase nodC then forms 3-geranylgeranylindole (3-GGI). Epoxidation by the FAD-dependent monooxygenase nodM leads to a single-epoxidized-GGI that is substrate of the terpene cyclase nodB for cyclization to yield emindole SB. The terminal methyl carbon, C28, of emindole SB is then oxidized by the cytochrome P450 monooxygenase nodW to produce nodulisporic acid F (NAF), the pentacyclic core of NAA. NAF is converted to nodulisporic acid E (NAE) via prenylation. This step is probably performed by one of the indole diterpene prenyltransferases nodD1 or nodD2. Several oxidation steps performed by the FAD-linked oxidoreductase nodO and one of the cytochrome P450 monooxygenase nodR, nodX or nodZ further convert NAE to nodulisporic acid D (NAD). NAD is substrate of cytochrome P450 monooxygenase nodJ to produce the precursor of nodulisporic acid C (NAC), converted to NAC by one of the indole diterpene prenyltransferases nodD1 or nodD2. The FAD-dependent monooxygenase nodY2 then oxidizes NAC to nodulisporic acid B (NAB). Finally NAB is converted to NAA by one of the cytochrome P450 monooxygenases nodR, nodX or nodZ. In Hypoxylon pulicicidum, this protein is Cytochrome P450 monooxygenase nodJ.